We begin with the raw amino-acid sequence, 1006 residues long: uncharacterized protein (1006 aa).

Positions 326–371 are disordered; sequence EMEKKRPRSPELVPKKIVMEKERPSSPDSEAEEREHNLRIEKERHQ. 2 stretches are compositionally biased toward basic and acidic residues: residues 338 to 350 and 358 to 371; these read VPKK…ERPS and EREH…ERHQ. Coiled-coil stretches lie at residues 358 to 473 and 756 to 782; these read EREH…ARLA and EVQK…AFGR.

This is an uncharacterized protein from Caenorhabditis elegans.